Consider the following 80-residue polypeptide: Exodeoxyribonuclease 7 small subunit (80 aa).

The protein belongs to the XseB family. Heterooligomer composed of large and small subunits.

It is found in the cytoplasm. It carries out the reaction Exonucleolytic cleavage in either 5'- to 3'- or 3'- to 5'-direction to yield nucleoside 5'-phosphates.. Functionally, bidirectionally degrades single-stranded DNA into large acid-insoluble oligonucleotides, which are then degraded further into small acid-soluble oligonucleotides. The protein is Exodeoxyribonuclease 7 small subunit of Vibrio atlanticus (strain LGP32) (Vibrio splendidus (strain Mel32)).